We begin with the raw amino-acid sequence, 399 residues long: Bombesin receptor subtype-3 (399 aa).

Residues 1–31 (MSQRQPQSPNQTLISTTNDTESSSSVVPNDS) show a composition bias toward polar residues. Positions 1–38 (MSQRQPQSPNQTLISTTNDTESSSSVVPNDSTNKRRTG) are disordered. Residues 1 to 41 (MSQRQPQSPNQTLISTTNDTESSSSVVPNDSTNKRRTGDNS) are Extracellular-facing. N-linked (GlcNAc...) asparagine glycosylation is found at N10, N18, and N29. A helical transmembrane segment spans residues 42 to 63 (PGIEALCAIYITYAVIISVGIL). Residues 64–82 (GNAILIKVFFKTKSMQTVP) lie on the Cytoplasmic side of the membrane. A helical membrane pass occupies residues 83-103 (NIFITSLAFGDLLLLLTCVPV). Residues 104–121 (DVTHYLAEGWLFGRIGCK) lie on the Extracellular side of the membrane. C120 and C203 are oxidised to a cystine. Residues 122–143 (VLSFIRLTSVGVSVFTLTILSA) traverse the membrane as a helical segment. Over 144-163 (DRYKAVVKPLERQPPNAILK) the chain is Cytoplasmic. Residues 164-184 (TCAKAGCIWIMSMIIALPEAI) form a helical membrane-spanning segment. Over 185-220 (FSNVYTFQDPDKNVTFKACASYPVSERLLQEIHSLL) the chain is Extracellular. The chain crosses the membrane as a helical span at residues 221–241 (CFLVFYIIPLSIISVYYSLIA). The Cytoplasmic segment spans residues 242–272 (RTLYKSTLNIPTEEQRHARKQIESRKRIAKT). A helical membrane pass occupies residues 273 to 293 (VLVLVALFALCWLPNHLLYLY). Residues 294–313 (RSFTSQTYMDSSTVHLFVTI) lie on the Extracellular side of the membrane. Residues 314–333 (ISRILAFSNSCVNPFALYWL) form a helical membrane-spanning segment. Over 334-399 (SNTFQQHFKA…CSVKKEDDRV (66 aa)) the chain is Cytoplasmic.

Belongs to the G-protein coupled receptor 1 family. In terms of assembly, interacts with C6orf89.

Its subcellular location is the cell membrane. Role in sperm cell division, maturation, or function. This receptor mediates its action by association with G proteins that activate a phosphatidylinositol-calcium second messenger system. This Ovis aries (Sheep) protein is Bombesin receptor subtype-3 (BRS3).